The following is a 702-amino-acid chain: Rho GTPase-activating protein 22 (702 aa).

Residues 43–151 (PVLKAGWLRK…WVQAIRRVIW (109 aa)) form the PH domain. Residues 161–355 (QRLEDTVHHE…VLIRKHGQLF (195 aa)) form the Rho-GAP domain. 4 disordered regions span residues 360–433 (LEEP…HTLP), 438–457 (SFRQ…SSLE), 480–511 (RASS…FSST), and 555–596 (PSPL…TQAH). 2 positions are modified to phosphoserine: Ser365 and Ser397. 4 stretches are compositionally biased toward polar residues: residues 407–421 (SRTS…TGPA), 438–456 (SFRQ…NSSL), 491–504 (GSAQ…NVPP), and 581–594 (SGSS…SPTQ). A coiled-coil region spans residues 594–691 (QAHVRRCRAL…EEFFSTLGSL (98 aa)).

Interacts with VEZF1. Predominantly present in endothelial cells (at protein level).

Its subcellular location is the cytoplasm. It localises to the nucleus. Functionally, rho GTPase-activating protein involved in the signal transduction pathway that regulates endothelial cell capillary tube formation during angiogenesis. Acts as a GTPase activator for the RAC1 by converting it to an inactive GDP-bound state. Inhibits RAC1-dependent lamellipodia formation. May also play a role in transcription regulation via its interaction with VEZF1, by regulating activity of the endothelin-1 (EDN1) promoter. The sequence is that of Rho GTPase-activating protein 22 (Arhgap22) from Mus musculus (Mouse).